The sequence spans 338 residues: Flap endonuclease 1 (338 aa).

An N-domain region spans residues Met1–Arg98. The Mg(2+) site is built by Asp27, Asp80, Glu152, Glu154, Asp173, Asp175, and Asp236. The interval Ala116 to Gly257 is I-domain. Residues Arg330–Phe338 form an interaction with PCNA region.

This sequence belongs to the XPG/RAD2 endonuclease family. FEN1 subfamily. As to quaternary structure, interacts with PCNA. PCNA stimulates the nuclease activity without altering cleavage specificity. The cofactor is Mg(2+).

Functionally, structure-specific nuclease with 5'-flap endonuclease and 5'-3' exonuclease activities involved in DNA replication and repair. During DNA replication, cleaves the 5'-overhanging flap structure that is generated by displacement synthesis when DNA polymerase encounters the 5'-end of a downstream Okazaki fragment. Binds the unpaired 3'-DNA end and kinks the DNA to facilitate 5' cleavage specificity. Cleaves one nucleotide into the double-stranded DNA from the junction in flap DNA, leaving a nick for ligation. Also involved in the base excision repair (BER) pathway. Acts as a genome stabilization factor that prevents flaps from equilibrating into structures that lead to duplications and deletions. Also possesses 5'-3' exonuclease activity on nicked or gapped double-stranded DNA. This chain is Flap endonuclease 1, found in Methanosarcina barkeri (strain Fusaro / DSM 804).